We begin with the raw amino-acid sequence, 387 residues long: MSNYLFTSESVSEGHPDKVADQISDAILDAILQQDPHARVACETMCSTGLIVLSGEITTDATIDYNAIPRGIVREIGYTSSEIGFDASTCAVLTAFNKQSPDIAQGVNRSKDEEMDQGAGDQGLMFGYACDETPQLMPLPIYYAHRLVEQQAKLRKSGRLSWLRPDAKSQVSVRYEDGFPKNIETIVISTQHSPDVPRDELVEGVIEEVIKPVLPAEMLSNHIQYLINPTGRFVVGGPMGDCGLTGRKIIVDTYGGTAHHGGGAFSGKDPSKVDRSAAYAARYVAKNIVAAGLARKCEVQVAYAIGVAKPVSLMVQTFGTGKIPDGKLAELIARHFDLRPRAIIHELDLLRPIYGKTAAYGHFGREEPSFTWEKTDMAEQLKADAGI.

His15 provides a ligand contact to ATP. Asp17 contacts Mg(2+). Glu43 serves as a coordination point for K(+). L-methionine contacts are provided by Glu56 and Gln99. A flexible loop region spans residues 99–109 (QSPDIAQGVNR). ATP contacts are provided by residues 166-168 (DAK), 232-233 (RF), Asp241, 247-248 (RK), Ala264, and Lys268. Residue Asp241 participates in L-methionine binding. An L-methionine-binding site is contributed by Lys272.

It belongs to the AdoMet synthase family. Homotetramer; dimer of dimers. Mg(2+) is required as a cofactor. It depends on K(+) as a cofactor.

It is found in the cytoplasm. The catalysed reaction is L-methionine + ATP + H2O = S-adenosyl-L-methionine + phosphate + diphosphate. Its pathway is amino-acid biosynthesis; S-adenosyl-L-methionine biosynthesis; S-adenosyl-L-methionine from L-methionine: step 1/1. Its function is as follows. Catalyzes the formation of S-adenosylmethionine (AdoMet) from methionine and ATP. The overall synthetic reaction is composed of two sequential steps, AdoMet formation and the subsequent tripolyphosphate hydrolysis which occurs prior to release of AdoMet from the enzyme. The sequence is that of S-adenosylmethionine synthase from Nitrosomonas europaea (strain ATCC 19718 / CIP 103999 / KCTC 2705 / NBRC 14298).